We begin with the raw amino-acid sequence, 492 residues long: Heat shock factor protein 4 (492 aa).

Residues 17 to 121 mediate DNA binding; that stretch reads VPAFLGKLWA…QLLERVRRKV (105 aa). A hydrophobic repeat HR-A/B region spans residues 129–203; that stretch reads GRWRPEDLGR…GPLQTGSSGA (75 aa). Residues 245 to 323 form an interactions with DUSP26, MAPK1 and MAPK2 region; sequence LPETTLGLSS…ECDFCVTAPP (79 aa). The interval 250 to 286 is disordered; it reads LGLSSSHRTRGPIISDIHEDSPSPDGTRLSPSSGGRR. K294 participates in a covalent cross-link: Glycyl lysine isopeptide (Lys-Gly) (interchain with G-Cter in SUMO). Residue S299 is modified to Phosphoserine. A disordered region spans residues 337–378; that stretch reads KGNFSPEGPRNAQQPEPRGPREVPDRGTLGLDRGARSPENLL. The tract at residues 365–390 is hydrophobic repeat HR-C; that stretch reads LGLDRGARSPENLLPPMLLRAPPESV.

This sequence belongs to the HSF family. Homotrimer. Exhibits constitutive DNA binding and forms trimers even in the absence of stress. Interacts with ALKBH4, DUSP26, MAPK1, MAPK2, MAPK8 and MAP kinase p38. In terms of processing, phosphorylated mainly on serine residues. Phosphorylation on Ser-299 promotes sumoylation on Lys-294. Post-translationally, constitutively sumoylated. Sumoylation represses the transcriptional activity and is promoted by phosphorylation on Ser-299.

The protein resides in the nucleus. In terms of biological role, heat-shock transcription factor that specifically binds heat shock promoter elements (HSE). Required for denucleation and organelle rupture and degradation that occur during eye lens terminal differentiation, when fiber cells that compose the lens degrade all membrane-bound organelles in order to provide lens with transparency to allow the passage of light. In this process, may regulate denucleation of lens fiber cells in part by activating DNASE2B transcription. May be involved in DNA repair through the transcriptional regulation of RAD51. May up-regulate p53/TP53 protein in eye lens fiber cells, possibly through protein stabilization. In the eye lens, controls the expression of alpha-crystallin B chain/CRYAB and consequently may be involved in the regulation of lysosomal acidification. In Canis lupus familiaris (Dog), this protein is Heat shock factor protein 4 (HSF4).